A 532-amino-acid polypeptide reads, in one-letter code: 4-amino-L-phenylalanyl-[CmlP-peptidyl-carrier-protein] 3-hydroxylase (532 aa).

Positions 305, 307, 309, 310, 377, and 403 each coordinate Fe cation.

It belongs to the metallo-beta-lactamase superfamily. In terms of assembly, homodimer. Fe(2+) serves as cofactor.

The catalysed reaction is 4-amino-L-phenylalanyl-[peptidyl-carrier protein] + AH2 + O2 = (2R)-2-(4-aminophenyl)-L-seryl-[peptidyl-carrier protein] + A + H2O. It functions in the pathway antibiotic biosynthesis. Functionally, involved in chloramphenicol biosynthesis. Catalyzes the beta-hydroxylation of 4-amino-L-phenylalanine (L-PAPA) covalently bound to CmlP to form L-p-aminophenylserine. This chain is 4-amino-L-phenylalanyl-[CmlP-peptidyl-carrier-protein] 3-hydroxylase, found in Streptomyces venezuelae (strain ATCC 10712 / CBS 650.69 / DSM 40230 / JCM 4526 / NBRC 13096 / PD 04745).